The chain runs to 78 residues: MSEVVVKEQLEQYLSKIERLEQEKADLSEEIKDIFQDASSHGFDVKAMKTVLKLKKLDKDKLAEQDAMLELYRDTLGI.

This sequence belongs to the UPF0335 family.

The chain is UPF0335 protein RBE_1185 from Rickettsia bellii (strain RML369-C).